A 241-amino-acid chain; its full sequence is Triosephosphate isomerase (241 aa).

Asn-9–Lys-11 serves as a coordination point for substrate. The active-site Electrophile is His-96. Residue Glu-165 is the Proton acceptor of the active site. Residues Gly-171, Ser-204, and Gly-225–Gly-226 contribute to the substrate site.

Belongs to the triosephosphate isomerase family. Homodimer.

Its subcellular location is the cytoplasm. The catalysed reaction is D-glyceraldehyde 3-phosphate = dihydroxyacetone phosphate. Its pathway is carbohydrate biosynthesis; gluconeogenesis. It participates in carbohydrate degradation; glycolysis; D-glyceraldehyde 3-phosphate from glycerone phosphate: step 1/1. In terms of biological role, involved in the gluconeogenesis. Catalyzes stereospecifically the conversion of dihydroxyacetone phosphate (DHAP) to D-glyceraldehyde-3-phosphate (G3P). The chain is Triosephosphate isomerase from Trichormus variabilis (strain ATCC 29413 / PCC 7937) (Anabaena variabilis).